Consider the following 257-residue polypeptide: Pantothenate synthetase (257 aa).

29 to 36 serves as a coordination point for ATP; that stretch reads MGNLHAGH. H36 serves as the catalytic Proton donor. A (R)-pantoate-binding site is contributed by Q60. Q60 contacts beta-alanine. Residue 145-148 coordinates ATP; the sequence is GEKD. Q151 provides a ligand contact to (R)-pantoate. ATP is bound by residues V174 and 182–185; that span reads LSSR.

Belongs to the pantothenate synthetase family. In terms of assembly, homodimer.

Its subcellular location is the cytoplasm. It catalyses the reaction (R)-pantoate + beta-alanine + ATP = (R)-pantothenate + AMP + diphosphate + H(+). It functions in the pathway cofactor biosynthesis; (R)-pantothenate biosynthesis; (R)-pantothenate from (R)-pantoate and beta-alanine: step 1/1. Catalyzes the condensation of pantoate with beta-alanine in an ATP-dependent reaction via a pantoyl-adenylate intermediate. In Coxiella burnetii (strain CbuK_Q154) (Coxiella burnetii (strain Q154)), this protein is Pantothenate synthetase.